A 175-amino-acid chain; its full sequence is Ribosome maturation factor RimM (175 aa).

In terms of domain architecture, PRC barrel spans 96-175 (EDEFYWRELF…RIEVDWDPGF (80 aa)).

The protein belongs to the RimM family. As to quaternary structure, binds ribosomal protein uS19.

It is found in the cytoplasm. In terms of biological role, an accessory protein needed during the final step in the assembly of 30S ribosomal subunit, possibly for assembly of the head region. Essential for efficient processing of 16S rRNA. May be needed both before and after RbfA during the maturation of 16S rRNA. It has affinity for free ribosomal 30S subunits but not for 70S ribosomes. The sequence is that of Ribosome maturation factor RimM from Aliivibrio fischeri (strain ATCC 700601 / ES114) (Vibrio fischeri).